A 108-amino-acid chain; its full sequence is Insulin (108 aa).

An N-terminal signal peptide occupies residues 1–21; it reads MAVWIQAGALLFLLAVSSVNA. Intrachain disulfides connect Cys-30–Cys-94, Cys-42–Cys-107, and Cys-93–Cys-98. Positions 54–85 are cleaved as a propeptide — c peptide; that stretch reads DVDPPLGFLPPKSAQETEVADFAFKDHAEVIR.

Belongs to the insulin family. Heterodimer of a B chain and an A chain linked by two disulfide bonds.

The protein localises to the secreted. Its function is as follows. Insulin decreases blood glucose concentration. It increases cell permeability to monosaccharides, amino acids and fatty acids. It accelerates glycolysis, the pentose phosphate cycle, and glycogen synthesis in liver. The sequence is that of Insulin (ins) from Cyprinus carpio (Common carp).